A 241-amino-acid chain; its full sequence is Ribonuclease PH (241 aa).

Phosphate is bound by residues Arg-89 and 127–129; that span reads GTR.

Belongs to the RNase PH family. Homohexameric ring arranged as a trimer of dimers.

The catalysed reaction is tRNA(n+1) + phosphate = tRNA(n) + a ribonucleoside 5'-diphosphate. Its function is as follows. Phosphorolytic 3'-5' exoribonuclease that plays an important role in tRNA 3'-end maturation. Removes nucleotide residues following the 3'-CCA terminus of tRNAs; can also add nucleotides to the ends of RNA molecules by using nucleoside diphosphates as substrates, but this may not be physiologically important. Probably plays a role in initiation of 16S rRNA degradation (leading to ribosome degradation) during starvation. In Xylella fastidiosa (strain 9a5c), this protein is Ribonuclease PH.